Reading from the N-terminus, the 772-residue chain is Glucocorticoid receptor (772 aa).

Positions 1–15 are enriched in basic and acidic residues; that stretch reads MDSKESLSPPGREEV. The tract at residues 1 to 22 is disordered; sequence MDSKESLSPPGREEVPSSVLRP. The interval 1–415 is modulating; sequence MDSKESLSPP…TTAAGPPPKL (415 aa). Omega-N-methylarginine is present on R25. Positions 39–82 are disordered; that stretch reads APVRVPASSPSLAPAAQPDSKQQRLAVDFPKGSASNAQQPDLSR. A compositionally biased stretch (low complexity) spans 44–58; sequence PASSPSLAPAAQPDS. Phosphoserine is present on residues S47, S115, S136, and S143. The tract at residues 132-186 is disordered; the sequence is NRSASGADNPRSTAPAAGSAAPTEGFPKTHSDLASERQNPKGQTGGSAGSAKLHP. The span at 143–156 shows a compositional bias: low complexity; that stretch reads STAPAAGSAAPTEG. Positions 158-170 are enriched in basic and acidic residues; sequence PKTHSDLASERQN. A phosphoserine mark is found at S203, S211, and S226. K258 is covalently cross-linked (Glycyl lysine isopeptide (Lys-Gly) (interchain with G-Cter in SUMO2)). Residues K277 and K293 each participate in a glycyl lysine isopeptide (Lys-Gly) (interchain with G-Cter in SUMO); alternate cross-link. Residues K277 and K293 each participate in a glycyl lysine isopeptide (Lys-Gly) (interchain with G-Cter in SUMO2); alternate cross-link. Residues S307 and S400 each carry the phosphoserine modification. K414 is covalently cross-linked (Glycyl lysine isopeptide (Lys-Gly) (interchain with G-Cter in ubiquitin)). 2 consecutive NR C4-type zinc fingers follow at residues 416-436 and 452-476; these read CLVCSDEASGCHYGVLTCGSC and CAGRNDCIIDKIRRKNCPACRYRKC. The nuclear receptor DNA-binding region spans 416 to 481; that stretch reads CLVCSDEASG…RYRKCLQAGM (66 aa). An N6-acetyllysine mark is found at K475, K487, K489, and K490. The segment at 480–772 is interaction with CLOCK; it reads GMNLEARKTK…NIKKLLFHQK (293 aa). Positions 482–518 are hinge; that stretch reads NLEARKTKKKIKGIQQTSTGVSQETSENPSNRTVVPA. The tract at residues 494-513 is disordered; that stretch reads GIQQTSTGVSQETSENPSNR. A compositionally biased stretch (polar residues) spans 499–513; it reads STGVSQETSENPSNR. The 235-residue stretch at 519–753 folds into the NR LBD domain; that stretch reads ALPQLTPTLV…FPEMLAEIIT (235 aa). The interval 527–692 is interaction with CRY1; that stretch reads LVSLLEVIEP…EIRMTYIKEL (166 aa). A Glycyl lysine isopeptide (Lys-Gly) (interchain with G-Cter in SUMO) cross-link involves residue K698.

It belongs to the nuclear hormone receptor family. NR3 subfamily. As to quaternary structure, heteromultimeric cytoplasmic complex with HSP90AA1, HSPA1A/HSPA1B, and FKBP5 or another immunophilin such as PPID, STIP1, or the immunophilin homolog PPP5C. Upon ligand binding FKBP5 dissociates from the complex and FKBP4 takes its place, thereby linking the complex to dynein and mediating transport to the nucleus, where the complex dissociates. Probably forms a complex composed of chaperones HSP90 and HSP70, co-chaperones CDC37, PPP5C, TSC1 and client protein TSC2, CDK4, AKT, RAF1 and NR3C1; this complex does not contain co-chaperones STIP1/HOP and PTGES3/p23. Directly interacts with UNC45A. Binds to DNA as a homodimer, and as heterodimer with NR3C2 or the retinoid X receptor. Binds STAT5A and STAT5B homodimers and heterodimers. Interacts with NRIP1, POU2F1, POU2F2 and TRIM28. Interacts with several coactivator complexes, including the SMARCA4 complex, CREBBP/EP300, TADA2L (Ada complex) and p160 coactivators such as NCOA2 and NCOA6. Interaction with BAG1 inhibits transactivation. Interacts with HEXIM1 and TGFB1I1. Interacts with NCOA1. Interacts with NCOA3, SMARCA4, SMARCC1, SMARCD1, and SMARCE1. Interacts with CLOCK, CRY1 and CRY2 in a ligand-dependent fashion. Interacts with CIART. Interacts with RWDD3. Interacts with UBE2I/UBC9 and this interaction is enhanced in the presence of RWDD3. Interacts with GRIP1. Interacts with NR4A3 (via nuclear receptor DNA-binding domain), represses transcription activity of NR4A3 on the POMC promoter Nur response element (NurRE). Directly interacts with PNRC2 to attract and form a complex with UPF1 and DCP1A; the interaction leads to rapid mRNA degradation. Interacts with GSK3B. Interacts with FNIP1 and FNIP2. Interacts (via C-terminus) with HNRNPU (via C-terminus). Interacts with MCM3AP. Interacts (via domain NR LBD) with HSP90AA1 and HSP90AB1. In the absence of hormonal ligand, interacts with TACC1. Interacts (via NR LBD domain) with ZNF764 (via KRAB domain); the interaction regulates transcription factor activity of NR3C1 by directing its actions toward certain biologic pathways. Acetylation by CLOCK reduces its binding to glucocorticoid response elements and its transcriptional activity. Post-translationally, increased proteasome-mediated degradation in response to glucocorticoids. In terms of processing, phosphorylated in the absence of hormone; becomes hyperphosphorylated in the presence of glucocorticoid. The Ser-203, Ser-226 and Ser-399-phosphorylated forms are mainly cytoplasmic, and the Ser-211-phosphorylated form is nuclear. Phosphorylation at Ser-211 increases transcriptional activity. Phosphorylation at Ser-203, Ser-226 and Ser-399 decreases signaling capacity. Phosphorylation at Ser-399 may protect from glucocorticoid-induced apoptosis. Phosphorylation at Ser-203 and Ser-211 is not required in regulation of chromosome segregation. May be dephosphorylated by PPP5C, attenuates NR3C1 action. Ubiquitinated by UBR5, leading to its degradation: UBR5 specifically recognizes and binds ligand-bound NR3C1 when it is not associated with coactivators (NCOAs). In presence of NCOAs, the UBR5-degron is not accessible, preventing its ubiquitination and degradation. Post-translationally, sumoylation at Lys-277 and Lys-293 negatively regulates its transcriptional activity. Sumoylation at Lys-698 positively regulates its transcriptional activity in the presence of RWDD3. Sumoylation at Lys-277 and Lys-293 is dispensable whereas sumoylation at Lys-698 is critical for the stimulatory effect of RWDD3 on its transcriptional activity. Heat shock increases sumoylation in a RWDD3-dependent manner.

It is found in the cytoplasm. The protein resides in the nucleus. Its subcellular location is the mitochondrion. It localises to the cytoskeleton. The protein localises to the spindle. It is found in the microtubule organizing center. The protein resides in the centrosome. Its subcellular location is the chromosome. It localises to the nucleoplasm. In terms of biological role, receptor for glucocorticoids (GC). Has a dual mode of action: as a transcription factor that binds to glucocorticoid response elements (GRE), both for nuclear and mitochondrial DNA, and as a modulator of other transcription factors. Affects inflammatory responses, cellular proliferation and differentiation in target tissues. Involved in chromatin remodeling. Plays a role in rapid mRNA degradation by binding to the 5' UTR of target mRNAs and interacting with PNRC2 in a ligand-dependent manner which recruits the RNA helicase UPF1 and the mRNA-decapping enzyme DCP1A, leading to RNA decay. Could act as a coactivator for STAT5-dependent transcription upon growth hormone (GH) stimulation and could reveal an essential role of hepatic GR in the control of body growth. Mediates glucocorticoid-induced apoptosis. Promotes accurate chromosome segregation during mitosis. May act as a tumor suppressor. May play a negative role in adipogenesis through the regulation of lipolytic and antilipogenic gene expression. This chain is Glucocorticoid receptor (NR3C1), found in Oryctolagus cuniculus (Rabbit).